A 241-amino-acid chain; its full sequence is Uridylate kinase (241 aa).

12-15 (KISG) contacts ATP. The tract at residues 20 to 25 (GDKGNG) is involved in allosteric activation by GTP. Glycine 54 is a binding site for UMP. Residues glycine 55 and arginine 59 each coordinate ATP. UMP-binding positions include aspartate 74 and 135-142 (TGNPYFST). ATP is bound by residues asparagine 163, tyrosine 169, and aspartate 172.

This sequence belongs to the UMP kinase family. As to quaternary structure, homohexamer.

It is found in the cytoplasm. It catalyses the reaction UMP + ATP = UDP + ADP. Its pathway is pyrimidine metabolism; CTP biosynthesis via de novo pathway; UDP from UMP (UMPK route): step 1/1. Its activity is regulated as follows. Allosterically activated by GTP. Inhibited by UTP. Its function is as follows. Catalyzes the reversible phosphorylation of UMP to UDP. This is Uridylate kinase from Lactobacillus acidophilus (strain ATCC 700396 / NCK56 / N2 / NCFM).